Consider the following 49-residue polypeptide: Large ribosomal subunit protein bL33B (49 aa).

This sequence belongs to the bacterial ribosomal protein bL33 family.

The sequence is that of Large ribosomal subunit protein bL33B from Staphylococcus saprophyticus subsp. saprophyticus (strain ATCC 15305 / DSM 20229 / NCIMB 8711 / NCTC 7292 / S-41).